The primary structure comprises 451 residues: Glutamyl-tRNA(Gln) amidotransferase subunit D (451 aa).

A disordered region spans residues 78 to 97 (PREAPTPGEEEGSQEDFGQP). One can recognise an Asparaginase/glutaminase domain in the interval 99-432 (PRVFFVGTGG…EEIQRLFTAN (334 aa)). Residues Thr-109, Thr-187, Asp-188, and Lys-266 contribute to the active site.

The protein belongs to the asparaginase 1 family. GatD subfamily. Heterodimer of GatD and GatE.

It carries out the reaction L-glutamyl-tRNA(Gln) + L-glutamine + ATP + H2O = L-glutaminyl-tRNA(Gln) + L-glutamate + ADP + phosphate + H(+). Its function is as follows. Allows the formation of correctly charged Gln-tRNA(Gln) through the transamidation of misacylated Glu-tRNA(Gln) in organisms which lack glutaminyl-tRNA synthetase. The reaction takes place in the presence of glutamine and ATP through an activated gamma-phospho-Glu-tRNA(Gln). The GatDE system is specific for glutamate and does not act on aspartate. In Thermofilum pendens (strain DSM 2475 / Hrk 5), this protein is Glutamyl-tRNA(Gln) amidotransferase subunit D.